The primary structure comprises 86 residues: Small ribosomal subunit protein bS16 (86 aa).

This sequence belongs to the bacterial ribosomal protein bS16 family.

The chain is Small ribosomal subunit protein bS16 from Trichormus variabilis (strain ATCC 29413 / PCC 7937) (Anabaena variabilis).